The sequence spans 353 residues: UPF0283 membrane protein YcjF (353 aa).

The span at 1 to 19 (MSEPLKPRIDFAEPLKEEP) shows a compositional bias: basic and acidic residues. Residues 1–35 (MSEPLKPRIDFAEPLKEEPTSAFKAQQTFSEAESR) form a disordered region. 3 helical membrane passes run 70-90 (MVMG…VQWT), 100-120 (VALG…GSVV), and 213-233 (ESTL…FIAW).

This sequence belongs to the UPF0283 family.

It is found in the cell inner membrane. This chain is UPF0283 membrane protein YcjF, found in Salmonella dublin (strain CT_02021853).